A 116-amino-acid polypeptide reads, in one-letter code: uncharacterized protein (116 aa).

This is an uncharacterized protein from Escherichia coli (strain K12).